We begin with the raw amino-acid sequence, 201 residues long: MRSFILRARSAPTDSQRLLDEIGGKCHTEILAHCMMNSLFTAQSHREDVVIHLVLESTRDYSRTITVEANEISDVGGFHEAALIALLVKALDASVGMGKEQTRVVQPGLTVRTISFEALLGELAEHHSLYMMDKKGDSIRDIKIGPNPCFILTDHIPMPKKSGNSMKRLGVEKISLGPKMLFASQCVTLIHNEIDHQEAGW.

S-adenosyl-L-methionine-binding residues include M132 and C186.

This sequence belongs to the methyltransferase superfamily. TrmY family.

It localises to the cytoplasm. The sequence is that of Putative pseudouridine methyltransferase from Vibrio cholerae serotype O1 (strain ATCC 39315 / El Tor Inaba N16961).